The primary structure comprises 858 residues: Ubiquitin carboxyl-terminal hydrolase 5 (858 aa).

The residue at position 2 (Ala-2) is an N-acetylalanine. Positions 74–96 are disordered; sequence RRTRRPKEEDPTTGTGDPPRKKP. A Glycyl lysine isopeptide (Lys-Gly) (interchain with G-Cter in SUMO) cross-link involves residue Lys-113. Ser-149 and Ser-156 each carry phosphoserine. Residues 175 to 283 form a UBP-type; degenerate zinc finger; the sequence is QVSKHAFSLK…EHLSHFGIDM (109 aa). A disulfide bridge links Cys-195 with Cys-816. Zn(2+) contacts are provided by Cys-199 and Cys-202. Position 209 (Trp-209) interacts with substrate. Cys-219 lines the Zn(2+) pocket. Residue 221-224 participates in substrate binding; that stretch reads RRYF. His-232 serves as a coordination point for Zn(2+). Substrate-binding residues include Tyr-259, Tyr-261, and Asp-264. Position 292 is a phosphothreonine (Thr-292). Residues 326 to 856 form the USP domain; the sequence is TGIRNLGNSC…LGYIYFYQRV (531 aa). The active-site Nucleophile is the Cys-335. A Phosphothreonine modification is found at Thr-623. UBA domains follow at residues 654-695 and 722-762; these read MLDE…VMSH and PPPE…IFSH. A phosphoserine mark is found at Ser-779, Ser-783, and Ser-785. The Proton acceptor role is filled by His-818.

It belongs to the peptidase C19 family. As to quaternary structure, homodimer. Interacts with TRIML1. Ubiquitinated by SMURF1; leading to proteasomal degradation. In terms of processing, SUMOylated at Lys-113; SUMOylation affects the interaction with Cav3.2 channels.

It is found in the cytoplasm. It localises to the stress granule. The protein localises to the nucleus. It catalyses the reaction Thiol-dependent hydrolysis of ester, thioester, amide, peptide and isopeptide bonds formed by the C-terminal Gly of ubiquitin (a 76-residue protein attached to proteins as an intracellular targeting signal).. In terms of biological role, deubiquitinating enzyme that participates in a wide range of cellular processes by specifically cleaving isopeptide bonds between ubiquitin and substrate proteins or ubiquitin itself. Affects thereby important cellular signaling pathways such as NF-kappa-B, Wnt/beta-catenin, and cytokine production by regulating ubiquitin-dependent protein degradation. Participates in the activation of the Wnt signaling pathway by promoting FOXM1 deubiquitination and stabilization that induces the recruitment of beta-catenin to Wnt target gene promoter. Regulates the assembly and disassembly of heat-induced stress granules by mediating the hydrolysis of unanchored ubiquitin chains. Promotes lipopolysaccharide-induced apoptosis and inflammatory response by stabilizing the TXNIP protein. Affects T-cell biology by stabilizing the inhibitory receptor on T-cells PDC1. Acts as a negative regulator of autophagy by regulating ULK1 at both protein and mRNA levels. Acts also as a negative regulator of type I interferon production by simultaneously removing both 'Lys-48'-linked unanchored and 'Lys-63'-linked anchored polyubiquitin chains on the transcription factor IRF3. Modulates the stability of DNA mismatch repair protein MLH1 and counteracts the effect of the ubiquitin ligase UBR4. Upon activation by insulin, it gets phosphorylated through mTORC1-mediated phosphorylation to enhance YTHDF1 stability by removing 'Lys-11'-linked polyubiquitination. May also deubiquitinate other substrates such as the calcium channel CACNA1H. This Pongo abelii (Sumatran orangutan) protein is Ubiquitin carboxyl-terminal hydrolase 5 (UBP5).